A 219-amino-acid chain; its full sequence is Lipid A acyltransferase PagP (219 aa).

The signal sequence occupies residues 1 to 28 (MRLILISHSRLFALSALFLIPTFDSLSA). The disordered stretch occupies residues 39–63 (IDRTTQSDSTTQRDSKTRRDPAPSF). Residues 49-59 (TQRDSKTRRDP) show a composition bias toward basic and acidic residues. Residues His91, Asp134, and Ser135 contribute to the active site.

It belongs to the lipid A palmitoyltransferase family. As to quaternary structure, homodimer.

It localises to the cell outer membrane. The enzyme catalyses a lipid A + a 1,2-diacyl-sn-glycero-3-phosphocholine = a hepta-acyl lipid A + a 2-acyl-sn-glycero-3-phosphocholine. It catalyses the reaction a lipid IVA + a 1,2-diacyl-sn-glycero-3-phosphocholine = a lipid IVB + a 2-acyl-sn-glycero-3-phosphocholine. The catalysed reaction is a lipid IIA + a 1,2-diacyl-sn-glycero-3-phosphocholine = a lipid IIB + a 2-acyl-sn-glycero-3-phosphocholine. Its function is as follows. Transfers a fatty acid residue from the sn-1 position of a phospholipid to the N-linked hydroxyfatty acid chain on the proximal unit of lipid A or its precursors. This is Lipid A acyltransferase PagP from Dickeya zeae (strain Ech586) (Dickeya dadantii (strain Ech586)).